We begin with the raw amino-acid sequence, 417 residues long: Serine hydroxymethyltransferase (417 aa).

Residues L112 and 116–118 (GHL) each bind (6S)-5,6,7,8-tetrahydrofolate. An N6-(pyridoxal phosphate)lysine modification is found at K221. E247 is a binding site for (6S)-5,6,7,8-tetrahydrofolate.

It belongs to the SHMT family. As to quaternary structure, homodimer. The cofactor is pyridoxal 5'-phosphate.

The protein localises to the cytoplasm. The enzyme catalyses (6R)-5,10-methylene-5,6,7,8-tetrahydrofolate + glycine + H2O = (6S)-5,6,7,8-tetrahydrofolate + L-serine. Its pathway is one-carbon metabolism; tetrahydrofolate interconversion. It participates in amino-acid biosynthesis; glycine biosynthesis; glycine from L-serine: step 1/1. Functionally, catalyzes the reversible interconversion of serine and glycine with tetrahydrofolate (THF) serving as the one-carbon carrier. This reaction serves as the major source of one-carbon groups required for the biosynthesis of purines, thymidylate, methionine, and other important biomolecules. Also exhibits THF-independent aldolase activity toward beta-hydroxyamino acids, producing glycine and aldehydes, via a retro-aldol mechanism. This Borrelia hermsii (strain HS1 / DAH) protein is Serine hydroxymethyltransferase.